Here is an 841-residue protein sequence, read N- to C-terminus: Protein NLP6 (841 aa).

The RWP-RK domain occupies 539-624 (EAKTVKKSER…IDSVQGADGS (86 aa)). Positions 649–682 (NCPPTSTSPLSNLQDVKIENRDAEDSAGSSTSRA) are disordered. The span at 651–662 (PPTSTSPLSNLQ) shows a compositional bias: polar residues. The PB1 domain occupies 741 to 823 (LVSIKATYRE…NTLRLSVHDV (83 aa)).

The protein resides in the nucleus. Its function is as follows. Probable transcription factor. The protein is Protein NLP6 (NLP6) of Arabidopsis thaliana (Mouse-ear cress).